The chain runs to 331 residues: Phenylalanine--tRNA ligase alpha subunit (331 aa).

Glu-252 is a Mg(2+) binding site.

Belongs to the class-II aminoacyl-tRNA synthetase family. Phe-tRNA synthetase alpha subunit type 1 subfamily. Tetramer of two alpha and two beta subunits. Requires Mg(2+) as cofactor.

Its subcellular location is the cytoplasm. The catalysed reaction is tRNA(Phe) + L-phenylalanine + ATP = L-phenylalanyl-tRNA(Phe) + AMP + diphosphate + H(+). This Stenotrophomonas maltophilia (strain R551-3) protein is Phenylalanine--tRNA ligase alpha subunit.